The primary structure comprises 481 residues: tRNA-guanine(15) transglycosylase (481 aa).

The active-site Nucleophile is D87. The substrate site is built by D122 and A191. C273, C275, and C278 together coordinate Zn(2+).

Belongs to the archaeosine tRNA-ribosyltransferase family. Zn(2+) serves as cofactor.

It catalyses the reaction guanosine(15) in tRNA + 7-cyano-7-deazaguanine = 7-cyano-7-carbaguanosine(15) in tRNA + guanine. It functions in the pathway tRNA modification; archaeosine-tRNA biosynthesis. Exchanges the guanine residue with 7-cyano-7-deazaguanine (preQ0) at position 15 in the dihydrouridine loop (D-loop) of archaeal tRNAs. The chain is tRNA-guanine(15) transglycosylase from Archaeoglobus fulgidus (strain ATCC 49558 / DSM 4304 / JCM 9628 / NBRC 100126 / VC-16).